Consider the following 232-residue polypeptide: Octanoyltransferase (232 aa).

Residues 44-219 enclose the BPL/LPL catalytic domain; the sequence is EHTGDELWVV…QLARQFGLVL (176 aa). Residues 83–90, 150–152, and 163–165 contribute to the substrate site; these read RGGQVTYH, ALG, and GLS. The Acyl-thioester intermediate role is filled by C181.

The protein belongs to the LipB family.

It is found in the cytoplasm. It catalyses the reaction octanoyl-[ACP] + L-lysyl-[protein] = N(6)-octanoyl-L-lysyl-[protein] + holo-[ACP] + H(+). Its pathway is protein modification; protein lipoylation via endogenous pathway; protein N(6)-(lipoyl)lysine from octanoyl-[acyl-carrier-protein]: step 1/2. Functionally, catalyzes the transfer of endogenously produced octanoic acid from octanoyl-acyl-carrier-protein onto the lipoyl domains of lipoate-dependent enzymes. Lipoyl-ACP can also act as a substrate although octanoyl-ACP is likely to be the physiological substrate. The sequence is that of Octanoyltransferase from Xanthomonas campestris pv. campestris (strain B100).